Reading from the N-terminus, the 443-residue chain is Ribosomal protein uS12 methylthiotransferase RimO (443 aa).

An MTTase N-terminal domain is found at 8–118 (PKVGFVSLGC…VVNAVHEVVP (111 aa)). Cysteine 17, cysteine 53, cysteine 82, cysteine 151, cysteine 155, and cysteine 158 together coordinate [4Fe-4S] cluster. The Radical SAM core domain maps to 137–375 (LTPRHYAYLK…MAHQQAISAA (239 aa)). The 66-residue stretch at 378–443 (QLRIGKEIDV…DEYDMWAEPI (66 aa)) folds into the TRAM domain.

It belongs to the methylthiotransferase family. RimO subfamily. Requires [4Fe-4S] cluster as cofactor.

The protein resides in the cytoplasm. The enzyme catalyses L-aspartate(89)-[ribosomal protein uS12]-hydrogen + (sulfur carrier)-SH + AH2 + 2 S-adenosyl-L-methionine = 3-methylsulfanyl-L-aspartate(89)-[ribosomal protein uS12]-hydrogen + (sulfur carrier)-H + 5'-deoxyadenosine + L-methionine + A + S-adenosyl-L-homocysteine + 2 H(+). In terms of biological role, catalyzes the methylthiolation of an aspartic acid residue of ribosomal protein uS12. The chain is Ribosomal protein uS12 methylthiotransferase RimO from Pseudomonas putida (strain ATCC 700007 / DSM 6899 / JCM 31910 / BCRC 17059 / LMG 24140 / F1).